We begin with the raw amino-acid sequence, 162 residues long: Transcriptional regulator MraZ (162 aa).

SpoVT-AbrB domains follow at residues Glu11–Val62 and Ala98–Thr141.

It belongs to the MraZ family. As to quaternary structure, forms oligomers.

The protein localises to the cytoplasm. It is found in the nucleoid. In Pelobacter propionicus (strain DSM 2379 / NBRC 103807 / OttBd1), this protein is Transcriptional regulator MraZ.